A 305-amino-acid chain; its full sequence is 17-beta-hydroxysteroid dehydrogenase type 3 (305 aa).

Residue G44–L73 coordinates NADP(+). S181 contacts substrate. Y194 serves as the catalytic Proton acceptor.

It belongs to the short-chain dehydrogenases/reductases (SDR) family. 17-beta-HSD 3 subfamily. Expressed in the testes.

Its subcellular location is the endoplasmic reticulum. The enzyme catalyses a 17beta-hydroxy steroid + NADP(+) = a 17-oxo steroid + NADPH + H(+). It catalyses the reaction testosterone + NADP(+) = androst-4-ene-3,17-dione + NADPH + H(+). The catalysed reaction is 17beta-estradiol + NADP(+) = estrone + NADPH + H(+). It carries out the reaction 3beta-hydroxyandrost-5-en-17-one + NADPH + H(+) = androst-5-en-3beta,17beta-diol + NADP(+). The enzyme catalyses 17beta-hydroxy-5alpha-androstan-3-one + NADP(+) = 5alpha-androstan-3,17-dione + NADPH + H(+). It catalyses the reaction androsterone + NADPH + H(+) = 5alpha-androstane-3alpha,17beta-diol + NADP(+). The catalysed reaction is 3beta-hydroxy-5alpha-androstan-17-one + NADPH + H(+) = 5alpha-androstane-3beta,17beta-diol + NADP(+). It carries out the reaction androst-4-ene-3,11,17-trione + NADPH + H(+) = 17beta-hydroxyandrost-4-ene-3,11-dione + NADP(+). The enzyme catalyses 11beta-hydroxyandrost-4-ene-3,17-dione + NADPH + H(+) = 11beta,17beta-dihydroxyandrost-4-ene-3-one + NADP(+). The protein operates within hormone biosynthesis; testosterone biosynthesis. It participates in steroid metabolism. Its function is as follows. Catalyzes the conversion of 17-oxosteroids to 17beta-hydroxysteroids. Favors the reduction of androstenedione to testosterone. Testosterone is the key androgen driving male development and function. Uses NADPH while the two other EDH17B enzymes use NADH. Androgens such as epiandrosterone, dehydroepiandrosterone, androsterone and androstanedione are accepted as substrates and reduced at C-17. Can reduce 11-ketoandrostenedione as well as 11beta-hydroxyandrostenedione at C-17 to the respective testosterone forms. Plays a role in the rate-limiting-step for the maximum level of testosterone production by the testis but does not affect basal testosterone production. In Mus musculus (Mouse), this protein is 17-beta-hydroxysteroid dehydrogenase type 3.